The chain runs to 131 residues: Small ribosomal subunit protein uS8 (131 aa).

Belongs to the universal ribosomal protein uS8 family. Part of the 30S ribosomal subunit. Contacts proteins S5 and S12.

Its function is as follows. One of the primary rRNA binding proteins, it binds directly to 16S rRNA central domain where it helps coordinate assembly of the platform of the 30S subunit. In Alkalilimnicola ehrlichii (strain ATCC BAA-1101 / DSM 17681 / MLHE-1), this protein is Small ribosomal subunit protein uS8.